We begin with the raw amino-acid sequence, 289 residues long: Rhomboid-type serine protease 2 (289 aa).

The next 6 helical transmembrane spans lie at 26 to 46, 67 to 87, 100 to 120, 122 to 142, 157 to 179, and 184 to 203; these read VVII…VDIQ, FPFI…LTPL, CLAL…IGLE, FVFG…LLLG, IGTY…AVLV, and FWGH…SSTL. The active-site Nucleophile is the S134. Residue H187 is part of the active site.

This sequence belongs to the peptidase S54 family.

It is found in the golgi apparatus membrane. It localises to the golgi apparatus. Its subcellular location is the cis-Golgi network membrane. The enzyme catalyses Cleaves type-1 transmembrane domains using a catalytic dyad composed of serine and histidine that are contributed by different transmembrane domains.. In terms of biological role, probable rhomboid-type serine protease that catalyzes intramembrane proteolysis. This chain is Rhomboid-type serine protease 2 (RBD2), found in Podospora anserina (Pleurage anserina).